The chain runs to 402 residues: Putative cytochrome P450 133B1 (402 aa).

A heme-binding site is contributed by Cys-348.

The protein belongs to the cytochrome P450 family. Heme is required as a cofactor.

The sequence is that of Putative cytochrome P450 133B1 (cyp133B1) from Xylella fastidiosa (strain 9a5c).